Here is a 77-residue protein sequence, read N- to C-terminus: Ribonuclease P protein component 1 (77 aa).

This sequence belongs to the eukaryotic/archaeal RNase P protein component 1 family. Consists of a catalytic RNA component and at least 4-5 protein subunits.

Its subcellular location is the cytoplasm. The enzyme catalyses Endonucleolytic cleavage of RNA, removing 5'-extranucleotides from tRNA precursor.. Functionally, part of ribonuclease P, a protein complex that generates mature tRNA molecules by cleaving their 5'-ends. In Sulfurisphaera tokodaii (strain DSM 16993 / JCM 10545 / NBRC 100140 / 7) (Sulfolobus tokodaii), this protein is Ribonuclease P protein component 1.